The primary structure comprises 125 residues: Egg cell-secreted protein 1.2 (125 aa).

Positions 1 to 22 are cleaved as a signal peptide; the sequence is MASNTSFLFATIAILLVLNISG.

Belongs to the plant egg cell-secreted peptide family. Restricted to female reproductive tissues, specifically accumulating in storage vesicles of the unfertilized egg cell.

Its subcellular location is the cytoplasmic vesicle. The protein resides in the secreted. Its function is as follows. Involved in the regulation of gamete interactions during the double fertilization and to prevent multiple-pollen tube attraction; mediates the redistribution of the gamete fusogen HAP2/GCS1 to the cell surface after secretion upon sperm arrival. The chain is Egg cell-secreted protein 1.2 (EC1.2) from Arabidopsis thaliana (Mouse-ear cress).